We begin with the raw amino-acid sequence, 340 residues long: MLDIDKSTVDFLVTENMVQEVEKVLSHDVPLVHTIVEEMVKRDIDRIYFVACGSPLNAAQTAKHLADRFSDLQVYAISGWEFCDNTPYRLDARCAVIGVSDYGKTEEVIKALELGRACGALTAAFTKRADSPITSAAEFSIDYQADCIWEIHLLLCYSVVLEMITRLAPHAEIGKIKNDLKQLPNALGYLVRTWEEKGRQLGELASQWPMIYTVAAGPLRPLGYKEGIVTLMEFTWTHGCVIESGEFRHGPLEIVEPGVPFLFLLGNDESRHTTERAINFVKQRTDNVIVIDYAAISQGLHPWLAPFLMFVPMEWLCYYLSIYKDHNPDERRYYGGLVEY.

SIS domains are found at residues 35-169 (IVEE…RLAP) and 201-331 (LGEL…PDER).

Homododecamer.

The enzyme catalyses N(6)-(6-phospho-D-fructosyl)-L-lysine + H2O = D-glucose 6-phosphate + L-lysine. The protein operates within carbohydrate metabolism; fructoselysine degradation; D-glucose 6-phosphate and lysine from fructoselysine: step 2/2. Functionally, catalyzes the reversible conversion of fructoselysine 6-phosphate to glucose 6-phosphate and lysine. Functions in a fructoselysine degradation pathway that allows E.coli to grow on fructoselysine or psicoselysine. The chain is Fructoselysine 6-phosphate deglycase (frlB) from Escherichia coli O157:H7.